Reading from the N-terminus, the 274-residue chain is Large ribosomal subunit protein uL2 (274 aa).

2 disordered regions span residues 38–57 and 224–256; these read KRTG…VGGG and AMNP…KGYK. A compositionally biased stretch (basic and acidic residues) spans 229–239; the sequence is DHPHGGGEGRN.

It belongs to the universal ribosomal protein uL2 family. In terms of assembly, part of the 50S ribosomal subunit. Forms a bridge to the 30S subunit in the 70S ribosome.

One of the primary rRNA binding proteins. Required for association of the 30S and 50S subunits to form the 70S ribosome, for tRNA binding and peptide bond formation. It has been suggested to have peptidyltransferase activity; this is somewhat controversial. Makes several contacts with the 16S rRNA in the 70S ribosome. The chain is Large ribosomal subunit protein uL2 from Acinetobacter baumannii (strain AB307-0294).